The primary structure comprises 270 residues: 4-hydroxy-tetrahydrodipicolinate reductase (270 aa).

Residue 7-12 coordinates NAD(+); that stretch reads GVSGRM. Arg-34 contributes to the NADP(+) binding site. NAD(+)-binding positions include 97-99 and 121-124; these read GTT and SGNM. Residue His-155 is the Proton donor/acceptor of the active site. His-156 contributes to the (S)-2,3,4,5-tetrahydrodipicolinate binding site. Lys-159 serves as the catalytic Proton donor. Residue 165–166 participates in (S)-2,3,4,5-tetrahydrodipicolinate binding; the sequence is GT.

This sequence belongs to the DapB family.

The protein localises to the cytoplasm. The catalysed reaction is (S)-2,3,4,5-tetrahydrodipicolinate + NAD(+) + H2O = (2S,4S)-4-hydroxy-2,3,4,5-tetrahydrodipicolinate + NADH + H(+). It catalyses the reaction (S)-2,3,4,5-tetrahydrodipicolinate + NADP(+) + H2O = (2S,4S)-4-hydroxy-2,3,4,5-tetrahydrodipicolinate + NADPH + H(+). The protein operates within amino-acid biosynthesis; L-lysine biosynthesis via DAP pathway; (S)-tetrahydrodipicolinate from L-aspartate: step 4/4. In terms of biological role, catalyzes the conversion of 4-hydroxy-tetrahydrodipicolinate (HTPA) to tetrahydrodipicolinate. The polypeptide is 4-hydroxy-tetrahydrodipicolinate reductase (Allorhizobium ampelinum (strain ATCC BAA-846 / DSM 112012 / S4) (Agrobacterium vitis (strain S4))).